The sequence spans 239 residues: uncharacterized protein (239 aa).

A signal peptide spans 1-19; the sequence is MPLLHRTIIFLQLLGTISS. N-linked (GlcNAc...) asparagine glycans are attached at residues N44, N58, N72, N92, N109, N136, N172, N192, and N213.

The protein localises to the secreted. This is an uncharacterized protein from Caenorhabditis elegans.